The primary structure comprises 342 residues: MSSIRLADLAQQLNAQLHGDGDIVITSIAPMHSANGEQITFLSDSRYRERLGECQAAAVVLQASDLPYCNIPALVVANPYLAYAYMAQIMDTTPIPAQDIHSSAVISPQATLGKNVAVGANAVIESGVVLGDNVVIGAGCFIGKNTRIGAGSRLWANVSVYHNVEMGEQCLIQSGAVIGSDGFGYANDRGKWVKIPQLGSVIIGDRVEIGACTTIDRGALDNTIIGNGVIIDNQCQIAHNVIIGDNTAVAGGVIMAGSLKIGCYCMIGGASVINGHMEICDKVTVTGMSMVMRPITEPGVYSSGIPAQPNKVWRKTAALVMNINEMNKRLKSMESKLEDENE.

His239 (proton acceptor) is an active-site residue.

Belongs to the transferase hexapeptide repeat family. LpxD subfamily. In terms of assembly, homotrimer.

The enzyme catalyses a UDP-3-O-[(3R)-3-hydroxyacyl]-alpha-D-glucosamine + a (3R)-hydroxyacyl-[ACP] = a UDP-2-N,3-O-bis[(3R)-3-hydroxyacyl]-alpha-D-glucosamine + holo-[ACP] + H(+). It carries out the reaction UDP-3-O-[(3R)-3-hydroxytetradecanoyl]-alpha-D-glucosamine + (3R)-hydroxytetradecanoyl-[ACP] = UDP-2-N,3-O-bis[(3R)-3-hydroxytetradecanoyl]-alpha-D-glucosamine + holo-[ACP] + H(+). It functions in the pathway glycolipid biosynthesis; lipid IV(A) biosynthesis; lipid IV(A) from (3R)-3-hydroxytetradecanoyl-[acyl-carrier-protein] and UDP-N-acetyl-alpha-D-glucosamine: step 3/6. Functionally, catalyzes the N-acylation of UDP-3-O-(hydroxytetradecanoyl)glucosamine using 3-hydroxytetradecanoyl-ACP as the acyl donor. Is involved in the biosynthesis of lipid A, a phosphorylated glycolipid that anchors the lipopolysaccharide to the outer membrane of the cell. The chain is UDP-3-O-(3-hydroxymyristoyl)glucosamine N-acyltransferase from Photorhabdus laumondii subsp. laumondii (strain DSM 15139 / CIP 105565 / TT01) (Photorhabdus luminescens subsp. laumondii).